Reading from the N-terminus, the 728-residue chain is Putative ankyrin repeat protein L271 (728 aa).

2 ANK repeats span residues Ser142 to Thr171 and Ile173 to Leu198. Positions Ser244 to Asn267 are enriched in low complexity. Residues Ser244–Asn271 are disordered. A coiled-coil region spans residues Thr292–Ile338. ANK repeat units follow at residues Thr358 to Tyr383, Asp384 to Gln414, Asp477 to Ser510, Ile514 to Phe543, Asn547 to Thr576, Asp594 to Ser626, Thr630 to Ser659, and Leu663 to Ile696.

The polypeptide is Putative ankyrin repeat protein L271 (Acanthamoeba polyphaga (Amoeba)).